A 230-amino-acid chain; its full sequence is Large ribosomal subunit protein uL1 (230 aa).

This sequence belongs to the universal ribosomal protein uL1 family. Part of the 50S ribosomal subunit.

In terms of biological role, binds directly to 23S rRNA. The L1 stalk is quite mobile in the ribosome, and is involved in E site tRNA release. Functionally, protein L1 is also a translational repressor protein, it controls the translation of the L11 operon by binding to its mRNA. This chain is Large ribosomal subunit protein uL1, found in Leptospira borgpetersenii serovar Hardjo-bovis (strain L550).